Reading from the N-terminus, the 887-residue chain is Exosome complex component 10 (887 aa).

Basic and acidic residues predominate over residues 1–10 (MAPPSPREHQ). The tract at residues 1–23 (MAPPSPREHQSAPATSATKPDAE) is disordered. K19 is covalently cross-linked (Glycyl lysine isopeptide (Lys-Gly) (interchain with G-Cter in SUMO2)). The 3'-5' exonuclease domain occupies 289–455 (HLVSSLDELV…YIYDRMRLEL (167 aa)). Residues D313, E315, D371, and D440 each contribute to the Mg(2+) site. One can recognise an HRDC domain in the interval 503 to 583 (NSQQLTAFQL…QQAREMPLLK (81 aa)). Residue K583 forms a Glycyl lysine isopeptide (Lys-Gly) (interchain with G-Cter in SUMO1); alternate linkage. K583 participates in a covalent cross-link: Glycyl lysine isopeptide (Lys-Gly) (interchain with G-Cter in SUMO2); alternate. K710 is covalently cross-linked (Glycyl lysine isopeptide (Lys-Gly) (interchain with G-Cter in SUMO2)). Disordered stretches follow at residues 734–757 (KEPK…AKEE) and 777–887 (NATK…WPKR). The segment covering 778–796 (ATKKRERATSDLRTIEQKQ) has biased composition (basic and acidic residues). A Phosphoserine modification is found at S823. Residues K835, K861, and K875 each participate in a glycyl lysine isopeptide (Lys-Gly) (interchain with G-Cter in SUMO2) cross-link.

Belongs to the exosome component 10/RRP6 family. In terms of assembly, component of the RNA exosome complex. The catalytically inactive RNA exosome core complex (Exo-9) associates with the catalytic subunit EXOSC10/RRP6 (via its N-terminus). Exo-9 may associate with DIS3 to form the nucleolar exosome complex, or DIS3L to form the cytoplasmic exosome complex. The RNA exosome complex interacts with cofactors C1D/RRP47, MPHOSPH6/MPP6 and MTREX/MTR4. Interacts with MTREX; the interaction with MTREX mediates the association of MTREX with nuclear RNA exosomes. Part of the small subunit (SSU) processome, composed of more than 70 proteins and the RNA chaperone small nucleolar RNA (snoRNA) U3. Interacts with ALYREF/THOC4. Interacts with DHX36; this interaction occurs in a RNase-insensitive manner. Interacts with NRDE2. Interacts (via C-terminus) with USP36 (via C-terminus); the interaction is facilitated by the association with RNA and promotes sumoylation of EXOSC10. Mg(2+) serves as cofactor. In terms of processing, sumoylated by USP36; sumoylation does not significantly affect EXOSC10 nucleolar localization and association with core exosome and USP36, but regulates the nucleolar RNA exosome activity in rRNA processing by promoting binding of EXOSC10 to pre-rRNAs. Effects of sumoylation on EXOSC10 levels vary between different studies. Sumoylation of EXOSC10 is required for the modulation of EXOSC10 effects on cellular protein translation and cell proliferation. Sumoylation is promoted by mild hypothermia. In terms of tissue distribution, expressed in ovary (at protein level). Expressed in testis (at protein level). Expressed in lung (at protein level).

It localises to the cytoplasm. Its subcellular location is the nucleus. It is found in the nucleolus. The protein localises to the nucleoplasm. Its function is as follows. Catalytic component of the RNA exosome complex which has 3'-&gt;5' exoribonuclease activity and participates in a multitude of cellular RNA processing and degradation events. In the nucleus, the RNA exosome complex is involved in proper maturation of stable RNA species such as rRNA, snRNA and snoRNA, in the elimination of RNA processing by-products and non-coding 'pervasive' transcripts, such as antisense RNA species and promoter-upstream transcripts (PROMPTs), and of mRNAs with processing defects, thereby limiting or excluding their export to the cytoplasm. Part of the small subunit (SSU) processome, first precursor of the small eukaryotic ribosomal subunit. During the assembly of the SSU processome in the nucleolus, many ribosome biogenesis factors, an RNA chaperone and ribosomal proteins associate with the nascent pre-rRNA and work in concert to generate RNA folding, modifications, rearrangements and cleavage as well as targeted degradation of pre-ribosomal RNA by the RNA exosome. The RNA exosome may be involved in Ig class switch recombination (CSR) and/or Ig variable region somatic hypermutation (SHM) by targeting AICDA deamination activity to transcribed dsDNA substrates. In the cytoplasm, the RNA exosome complex is involved in general mRNA turnover and specifically degrades inherently unstable mRNAs containing AU-rich elements (AREs) within their 3' untranslated regions, and in RNA surveillance pathways, preventing translation of aberrant mRNAs. It seems to be involved in degradation of histone mRNA. EXOSC10 is required for nucleolar localization of C1D and probably mediates the association of MTREX, C1D and MPHOSPH6 with the RNA exosome involved in the maturation of 5.8S rRNA. Plays a role in the recruitment of replication protein A complex (RPA) and RAD51 to DNA double-strand breaks caused by irradiation, contributing to DNA repair by homologous recombination. Regulates levels of damage-induced RNAs in order to prevent DNA-RNA hybrid formation at DNA double-strand breaks and limit DNA end resection after damage. Plays a role in oocyte development, maturation and survival. Required for normal testis development and mitotic division of spermatogonia. Plays a role in proper embryo development. Required for global protein translation. Required for cell proliferation. In Mus musculus (Mouse), this protein is Exosome complex component 10 (Exosc10).